Consider the following 386-residue polypeptide: Nucleosome assembly protein 1-like 4 (386 aa).

The tract at residues 1–28 (MAENSLSDGGPADSVEAAKNASNTEKLT) is disordered. Residue A2 is modified to N-acetylalanine. Phosphoserine is present on residues S5, S7, and S49. T51 bears the Phosphothreonine mark. Phosphoserine occurs at positions 53 and 54. T58 is modified (phosphothreonine). An N6-acetyllysine modification is found at K105. S125 is subject to Phosphoserine. Residue K146 is modified to N6-acetyllysine. The Nuclear localization signal motif lies at 265–271 (IKKKQKH). A Phosphoserine modification is found at S304. Over residues 339-370 (AIEDDDNFEEGEEGEEEELEGDEEGEDEDDAD) the composition is skewed to acidic residues. The segment at 339 to 386 (AIEDDDNFEEGEEGEEEELEGDEEGEDEDDADVNPKKEPIQPAECKQQ) is disordered.

Belongs to the nucleosome assembly protein (NAP) family. Interacts with core (H2A, H2B, H3, H4) and linker (H1) histones. Post-translationally, polyglutamylated and polyglycylated. These 2 modifications occur exclusively on glutamate residues and result in either polyglutamate or polyglycine chains on the gamma-carboxyl group. Both modifications can coexist on the same protein on adjacent residues, and lowering polyglycylation levels increases polyglutamylation, and reciprocally. Polyglutamylated by TTLL4. Phosphorylated at the G0/G1 boundary but it is not phosphorylated in S-phase. Phosphorylated protein remains in the cytoplasm in a complex with histones during the G0/G1 transition, whereas dephosphorylation triggers its transport into the nucleus at the G1/S-boundary.

It localises to the nucleus. It is found in the cytoplasm. Functionally, acts as a histone chaperone in nucleosome assembly. This Rattus norvegicus (Rat) protein is Nucleosome assembly protein 1-like 4 (Nap1l4).